The primary structure comprises 335 residues: DNA-directed RNA polymerase subunit alpha (335 aa).

The alpha N-terminal domain (alpha-NTD) stretch occupies residues 1 to 233; the sequence is MTAVNDFLTP…QQIAVFVDLE (233 aa). The interval 247–335 is alpha C-terminal domain (alpha-CTD); the sequence is IDPILLRPVD…DDDRLNAKLR (89 aa).

This sequence belongs to the RNA polymerase alpha chain family. In terms of assembly, homodimer. The RNAP catalytic core consists of 2 alpha, 1 beta, 1 beta' and 1 omega subunit. When a sigma factor is associated with the core the holoenzyme is formed, which can initiate transcription.

The enzyme catalyses RNA(n) + a ribonucleoside 5'-triphosphate = RNA(n+1) + diphosphate. In terms of biological role, DNA-dependent RNA polymerase catalyzes the transcription of DNA into RNA using the four ribonucleoside triphosphates as substrates. In Alcanivorax borkumensis (strain ATCC 700651 / DSM 11573 / NCIMB 13689 / SK2), this protein is DNA-directed RNA polymerase subunit alpha.